The following is a 199-amino-acid chain: Large ribosomal subunit protein bL25 (199 aa).

It belongs to the bacterial ribosomal protein bL25 family. CTC subfamily. As to quaternary structure, part of the 50S ribosomal subunit; part of the 5S rRNA/L5/L18/L25 subcomplex. Contacts the 5S rRNA. Binds to the 5S rRNA independently of L5 and L18.

Its function is as follows. This is one of the proteins that binds to the 5S RNA in the ribosome where it forms part of the central protuberance. The chain is Large ribosomal subunit protein bL25 from Caldanaerobacter subterraneus subsp. tengcongensis (strain DSM 15242 / JCM 11007 / NBRC 100824 / MB4) (Thermoanaerobacter tengcongensis).